Here is a 302-residue protein sequence, read N- to C-terminus: 4-hydroxy-tetrahydrodipicolinate synthase (302 aa).

A pyruvate-binding site is contributed by threonine 55. Catalysis depends on tyrosine 144, which acts as the Proton donor/acceptor. Lysine 172 acts as the Schiff-base intermediate with substrate in catalysis. Position 214 (valine 214) interacts with pyruvate.

Belongs to the DapA family. As to quaternary structure, homotetramer; dimer of dimers.

Its subcellular location is the cytoplasm. The catalysed reaction is L-aspartate 4-semialdehyde + pyruvate = (2S,4S)-4-hydroxy-2,3,4,5-tetrahydrodipicolinate + H2O + H(+). The protein operates within amino-acid biosynthesis; L-lysine biosynthesis via DAP pathway; (S)-tetrahydrodipicolinate from L-aspartate: step 3/4. Functionally, catalyzes the condensation of (S)-aspartate-beta-semialdehyde [(S)-ASA] and pyruvate to 4-hydroxy-tetrahydrodipicolinate (HTPA). This Prochlorococcus marinus (strain MIT 9211) protein is 4-hydroxy-tetrahydrodipicolinate synthase.